The primary structure comprises 528 residues: Protein MGF 505-7R (528 aa).

ANK repeat units lie at residues 54-83 (SINDALQLAGEEGDTDVVQLLLLWEGNLHY), 129-158 (GCDLICLLQHAVKCDMLSILVKYKEDLLNV), 261-290 (SVKRALSYAVIDNKRKIIDYLVRHENIPRG), 292-321 (IERLLHLAVKKQSSRKTLNLLLSYINYKVK), and 322-352 (NVKKLLEHVVKYNSTLVIRILLEKKKNLLDA).

It belongs to the asfivirus MGF 505 family. In terms of assembly, interacts with host STING1. Interacts with host JAK1; this interaction leads to JAK1 degradation. Interacts with host JAK2; this interaction leads to JAK2 degradation. Interacts with host RELA; this interaction inhibits NF-kappa-B promoter activity.

It is found in the host cytoplasm. Plays a role in virus cell tropism, and may be required for efficient virus replication in macrophages. Interferes with host NF-kappa-B promoter activity mediated by TLR8. Mechanistically, inhibits the phosphorylation and subsequent nuclear translocation of host NF-kappa-B RELA subunit downstream of TLR8. Promotes the expression of the autophagy-related protein host ULK1 to degrade host STING and inhibit the interferon response. Inhibits also JAK1- and JAK2-mediated signaling and thus negatively regulates the IFN-gamma signaling. This chain is Protein MGF 505-7R, found in African swine fever virus (strain Badajoz 1971 Vero-adapted) (Ba71V).